A 253-amino-acid chain; its full sequence is Complement C1q subcomponent subunit B (253 aa).

The N-terminal stretch at 1–25 (MKTQWSEILTPLLLLLLGLLHVSWA) is a signal peptide. The residue at position 26 (Gln26) is a Pyrrolidone carboxylic acid. In terms of domain architecture, Collagen-like spans 29–112 (CTGSPGIPGV…GPRGPKGGSG (84 aa)). A disordered region spans residues 29-114 (CTGSPGIPGV…RGPKGGSGDY (86 aa)). Pro33, Pro36, Pro39, Pro51, and Pro54 each carry 4-hydroxyproline. A 5-hydroxylysine mark is found at Lys57 and Lys60. Residue Pro63 is modified to 4-hydroxyproline. A compositionally biased stretch (basic and acidic residues) spans 68–77 (DHGELGEKGD). Lys75 is subject to 5-hydroxylysine. Positions 78 to 96 (AGIPGIPGKVGPKGPVGPK) are enriched in low complexity. 2 positions are modified to 4-hydroxyproline: Pro81 and Pro84. 5-hydroxylysine occurs at positions 90 and 96. 4-hydroxyproline occurs at positions 99 and 102. Lys108 bears the 5-hydroxylysine mark. Residues 115 to 253 (KATQKVAFSA…GFLLFPDMDV (139 aa)) enclose the C1q domain. Cys179 and Cys198 are joined by a disulfide. 3 residues coordinate Ca(2+): Asp199, Tyr200, and Gln206.

In terms of assembly, core component of the complement C1 complex, a calcium-dependent complex composed of 1 molecule of the C1Q subcomplex, 2 molecules of C1R and 2 molecules of C1S. The C1Q subcomplex is composed 18 subunits: 3 chains of C1QA, C1QB, and C1QC trimerize to form 6 collagen-like triple helices connected to six globular ligand-recognition modules (C1q domain). Hydroxylated on lysine and proline residues. Hydroxylated lysine residues can be glycosylated. Human C1Q contains up to 68.3 hydroxylysine-galactosylglucose residues and up to 2.5 hydroxylysine-galactose per molecule. Total percentage hydroxylysine residues glycosylated is 86.4%. As to expression, highest levels in spleen, lung and brain. Weaker expression in kidney and liver. In the spleen, localized mainly to the red pulp, in cells mainly of monocyte-macrophage lineage. In white pulp, localized in specific dendritic cells such as those from the periarteriolar lymphatic sheath (PALS).

Its subcellular location is the secreted. The protein resides in the cell surface. With respect to regulation, the C1Q subcomplex is inhibited by sulfated molecules, such as triterpenoid sulfates, heparan sulfate, or chondroitin sulfates. Its function is as follows. Core component of the complement C1 complex, a multiprotein complex that initiates the classical pathway of the complement system, a cascade of proteins that leads to phagocytosis and breakdown of pathogens and signaling that strengthens the adaptive immune system. The classical complement pathway is initiated by the C1Q subcomplex of the C1 complex, which specifically binds IgG or IgM immunoglobulins complexed with antigens, forming antigen-antibody complexes on the surface of pathogens: C1QA, together with C1QB and C1QC, specifically recognizes and binds the Fc regions of IgG or IgM via its C1q domain. Immunoglobulin-binding activates the proenzyme C1R, which cleaves C1S, initiating the proteolytic cascade of the complement system. The C1Q subcomplex is activated by a hexamer of IgG complexed with antigens, while it is activated by a pentameric IgM. The C1Q subcomplex also recognizes and binds phosphatidylserine exposed on the surface of cells undergoing programmed cell death, possibly promoting activation of the complement system. The polypeptide is Complement C1q subcomponent subunit B (Rattus norvegicus (Rat)).